We begin with the raw amino-acid sequence, 553 residues long: Glucose-6-phosphate isomerase (553 aa).

Residues 164-165 (GS), 215-220 (SKTFTT), Gln-359, Glu-363, His-394, and Lys-516 contribute to the D-glucose 6-phosphate site. The active-site Proton donor is Glu-363. Catalysis depends on residues His-394 and Lys-516.

Belongs to the GPI family. Homodimer.

It is found in the cytoplasm. The protein localises to the cytosol. It carries out the reaction alpha-D-glucose 6-phosphate = beta-D-fructose 6-phosphate. It participates in carbohydrate degradation; glycolysis; D-glyceraldehyde 3-phosphate and glycerone phosphate from D-glucose: step 2/4. In terms of biological role, in the cytoplasm, catalyzes the conversion of glucose-6-phosphate to fructose-6-phosphate, the second step in glycolysis, and the reverse reaction during gluconeogenesis. The chain is Glucose-6-phosphate isomerase (pgiA) from Aspergillus oryzae (strain ATCC 42149 / RIB 40) (Yellow koji mold).